The chain runs to 46 residues: GTP cyclohydrolase 1 (46 aa).

Cys-7 is a Zn(2+) binding site.

Belongs to the GTP cyclohydrolase I family. As to quaternary structure, homomer.

The catalysed reaction is GTP + H2O = 7,8-dihydroneopterin 3'-triphosphate + formate + H(+). Its pathway is cofactor biosynthesis; 7,8-dihydroneopterin triphosphate biosynthesis; 7,8-dihydroneopterin triphosphate from GTP: step 1/1. This chain is GTP cyclohydrolase 1 (folE), found in Bacillus pumilus (Bacillus mesentericus).